Here is a 195-residue protein sequence, read N- to C-terminus: uncharacterized protein (195 aa).

Residues 24-141 (NTDENLKLIF…VFLADKISWD (118 aa)) form the HD domain.

This is an uncharacterized protein from Lactococcus lactis subsp. cremoris (Streptococcus cremoris).